Consider the following 105-residue polypeptide: ATP-dependent Clp protease adapter protein ClpS (105 aa).

It belongs to the ClpS family. As to quaternary structure, binds to the N-terminal domain of the chaperone ClpA.

Involved in the modulation of the specificity of the ClpAP-mediated ATP-dependent protein degradation. The sequence is that of ATP-dependent Clp protease adapter protein ClpS from Aeromonas salmonicida (strain A449).